A 621-amino-acid polypeptide reads, in one-letter code: Interferon-induced GTP-binding protein Mx1 (621 aa).

The Dynamin-type G domain occupies 31–304 (DLALPAIAVI…LVHHIEKSLP (274 aa)). Positions 41–48 (GDQSSGKS) are G1 motif. GTP is bound at residue 41–48 (GDQSSGKS). The G2 motif stretch occupies residues 66–68 (VTR). The segment at 142 to 145 (DLPG) is G3 motif. Residues 142-146 (DLPGI) and 211-214 (TKPD) contribute to the GTP site. The interval 211–214 (TKPD) is G4 motif. Residues 243–246 (KCRG) form a G5 motif region. In terms of domain architecture, GED spans 535–621 (LQEMMLHLKS…MKARSYLVEF (87 aa)).

It belongs to the TRAFAC class dynamin-like GTPase superfamily. Dynamin/Fzo/YdjA family.

It localises to the cytoplasm. Functionally, does not inhibit strain RB-1 of the fish pathogen, infectious hematopoietic necrosis virus (IHNV). In Oncorhynchus mykiss (Rainbow trout), this protein is Interferon-induced GTP-binding protein Mx1 (mx1).